A 120-amino-acid polypeptide reads, in one-letter code: Nitrogenase-stabilizing/protective protein NifW (120 aa).

This sequence belongs to the NifW family. Homotrimer; associates with NifD.

Its function is as follows. May protect the nitrogenase Fe-Mo protein from oxidative damage. The protein is Nitrogenase-stabilizing/protective protein NifW of Rhodospirillum rubrum (strain ATCC 11170 / ATH 1.1.1 / DSM 467 / LMG 4362 / NCIMB 8255 / S1).